The sequence spans 662 residues: UPF0313 protein CPE1196 (662 aa).

Residues 296-567 (AIEEVKFSLV…AMQRALLQFK (272 aa)) enclose the Radical SAM core domain. [4Fe-4S] cluster contacts are provided by cysteine 310, cysteine 314, and cysteine 317. The segment at 597–662 (RDKNSFGKGN…QRGSKGKKRR (66 aa)) is disordered. Positions 618–632 (NRNENSGRRESEDKK) are enriched in basic and acidic residues. Basic residues predominate over residues 633–644 (RSSHSKKQRGNK).

Belongs to the UPF0313 family. It depends on [4Fe-4S] cluster as a cofactor.

This Clostridium perfringens (strain 13 / Type A) protein is UPF0313 protein CPE1196.